The following is a 284-amino-acid chain: Polyamine aminopropyltransferase (284 aa).

The region spanning 2–237 (ELWYTEKHTE…GHWLFGFASK (236 aa)) is the PABS domain. Glutamine 31 is a binding site for S-methyl-5'-thioadenosine. Residues histidine 62 and aspartate 86 each contribute to the spermidine site. S-methyl-5'-thioadenosine is bound by residues glutamate 106 and 137-138 (DG). The active-site Proton acceptor is the aspartate 155. 155 to 158 (DSTD) serves as a coordination point for spermidine. Proline 162 provides a ligand contact to S-methyl-5'-thioadenosine.

This sequence belongs to the spermidine/spermine synthase family. In terms of assembly, homodimer or homotetramer.

The protein resides in the cytoplasm. It catalyses the reaction S-adenosyl 3-(methylsulfanyl)propylamine + putrescine = S-methyl-5'-thioadenosine + spermidine + H(+). The protein operates within amine and polyamine biosynthesis; spermidine biosynthesis; spermidine from putrescine: step 1/1. Functionally, catalyzes the irreversible transfer of a propylamine group from the amino donor S-adenosylmethioninamine (decarboxy-AdoMet) to putrescine (1,4-diaminobutane) to yield spermidine. This Clostridium botulinum (strain Eklund 17B / Type B) protein is Polyamine aminopropyltransferase.